The following is a 436-amino-acid chain: GTPase Der (436 aa).

EngA-type G domains are found at residues 4 to 167 (PTVA…PNEI) and 175 to 351 (IKFS…HAQN). GTP-binding positions include 10–17 (GRPNVGKS), 57–61 (DTGGI), 119–122 (NKVD), 181–188 (GRPNVGKS), 229–233 (DTAGM), and 294–297 (NKWD). Residues 352–436 (LRISSSVLND…PVHLIARKRK (85 aa)) enclose the KH-like domain.

This sequence belongs to the TRAFAC class TrmE-Era-EngA-EngB-Septin-like GTPase superfamily. EngA (Der) GTPase family. Associates with the 50S ribosomal subunit.

GTPase that plays an essential role in the late steps of ribosome biogenesis. This Lactococcus lactis subsp. lactis (strain IL1403) (Streptococcus lactis) protein is GTPase Der.